The primary structure comprises 20 residues: Hemocyanin subunit Ib (20 aa).

The interval 1–20 is disordered; it reads DSVGSTTAHKQQNINHLLDK.

Belongs to the tyrosinase family. Hemocyanin subfamily. As to quaternary structure, composed of 3 major subunits (IB, II and III) and 1 minor subunit (IA) which form homohexamers and heterohexamers. May also form larger structures. Hemolymph.

Its subcellular location is the secreted. The protein resides in the extracellular space. Functionally, hemocyanins are copper-containing oxygen carriers occurring freely dissolved in the hemolymph of many mollusks and arthropods. The chain is Hemocyanin subunit Ib from Panulirus japonicus (Japanese spiny lobster).